The sequence spans 154 residues: 17 kDa surface antigen (154 aa).

An N-terminal signal peptide occupies residues 1-19; sequence MKLLSKIMIIALAASMLQA. Residue cysteine 20 is the site of N-palmitoyl cysteine attachment. Cysteine 20 is lipidated: S-diacylglycerol cysteine.

It belongs to the rickettsiale 17 kDa surface antigen family.

The protein resides in the cell outer membrane. The chain is 17 kDa surface antigen (omp) from Rickettsia montanensis.